The following is a 256-amino-acid chain: Protein FixA (256 aa).

This sequence belongs to the ETF beta-subunit/FixA family. In terms of assembly, heterodimer of FixA and FixB.

It functions in the pathway amine and polyamine metabolism; carnitine metabolism. In terms of biological role, required for anaerobic carnitine reduction. May bring reductant to CaiA. In Escherichia coli O139:H28 (strain E24377A / ETEC), this protein is Protein FixA.